The chain runs to 388 residues: Succinyl-diaminopimelate desuccinylase (388 aa).

Histidine 72 is a binding site for Zn(2+). Aspartate 74 is a catalytic residue. Aspartate 105 lines the Zn(2+) pocket. The active-site Proton acceptor is the glutamate 139. Glutamate 140, glutamate 168, and histidine 353 together coordinate Zn(2+).

The protein belongs to the peptidase M20A family. DapE subfamily. Homodimer. Zn(2+) serves as cofactor. The cofactor is Co(2+).

It carries out the reaction N-succinyl-(2S,6S)-2,6-diaminopimelate + H2O = (2S,6S)-2,6-diaminopimelate + succinate. It participates in amino-acid biosynthesis; L-lysine biosynthesis via DAP pathway; LL-2,6-diaminopimelate from (S)-tetrahydrodipicolinate (succinylase route): step 3/3. Its function is as follows. Catalyzes the hydrolysis of N-succinyl-L,L-diaminopimelic acid (SDAP), forming succinate and LL-2,6-diaminopimelate (DAP), an intermediate involved in the bacterial biosynthesis of lysine and meso-diaminopimelic acid, an essential component of bacterial cell walls. This is Succinyl-diaminopimelate desuccinylase from Orientia tsutsugamushi (strain Ikeda) (Rickettsia tsutsugamushi).